The primary structure comprises 107 residues: Large ribosomal subunit protein uL24 (107 aa).

It belongs to the universal ribosomal protein uL24 family. As to quaternary structure, part of the 50S ribosomal subunit.

Functionally, one of two assembly initiator proteins, it binds directly to the 5'-end of the 23S rRNA, where it nucleates assembly of the 50S subunit. One of the proteins that surrounds the polypeptide exit tunnel on the outside of the subunit. This is Large ribosomal subunit protein uL24 from Mycobacterium ulcerans (strain Agy99).